A 374-amino-acid polypeptide reads, in one-letter code: Methylthioribose-1-phosphate isomerase (374 aa).

S2 bears the N-acetylserine mark. D253 functions as the Proton donor in the catalytic mechanism.

Belongs to the eIF-2B alpha/beta/delta subunits family. MtnA subfamily.

The protein localises to the cytoplasm. It is found in the nucleus. It carries out the reaction 5-(methylsulfanyl)-alpha-D-ribose 1-phosphate = 5-(methylsulfanyl)-D-ribulose 1-phosphate. The protein operates within amino-acid biosynthesis; L-methionine biosynthesis via salvage pathway; L-methionine from S-methyl-5-thio-alpha-D-ribose 1-phosphate: step 1/6. Its function is as follows. Catalyzes the interconversion of methylthioribose-1-phosphate (MTR-1-P) into methylthioribulose-1-phosphate (MTRu-1-P). This Arabidopsis thaliana (Mouse-ear cress) protein is Methylthioribose-1-phosphate isomerase.